A 476-amino-acid chain; its full sequence is Aspartyl/glutamyl-tRNA(Asn/Gln) amidotransferase subunit B (476 aa).

Belongs to the GatB/GatE family. GatB subfamily. In terms of assembly, heterotrimer of A, B and C subunits.

It catalyses the reaction L-glutamyl-tRNA(Gln) + L-glutamine + ATP + H2O = L-glutaminyl-tRNA(Gln) + L-glutamate + ADP + phosphate + H(+). The catalysed reaction is L-aspartyl-tRNA(Asn) + L-glutamine + ATP + H2O = L-asparaginyl-tRNA(Asn) + L-glutamate + ADP + phosphate + 2 H(+). Functionally, allows the formation of correctly charged Asn-tRNA(Asn) or Gln-tRNA(Gln) through the transamidation of misacylated Asp-tRNA(Asn) or Glu-tRNA(Gln) in organisms which lack either or both of asparaginyl-tRNA or glutaminyl-tRNA synthetases. The reaction takes place in the presence of glutamine and ATP through an activated phospho-Asp-tRNA(Asn) or phospho-Glu-tRNA(Gln). In Neisseria meningitidis serogroup C (strain 053442), this protein is Aspartyl/glutamyl-tRNA(Asn/Gln) amidotransferase subunit B.